Reading from the N-terminus, the 467-residue chain is Asparagine--tRNA ligase (467 aa).

Belongs to the class-II aminoacyl-tRNA synthetase family. In terms of assembly, homodimer.

The protein localises to the cytoplasm. The enzyme catalyses tRNA(Asn) + L-asparagine + ATP = L-asparaginyl-tRNA(Asn) + AMP + diphosphate + H(+). The chain is Asparagine--tRNA ligase from Haemophilus ducreyi (strain 35000HP / ATCC 700724).